Consider the following 179-residue polypeptide: Replication restart protein DnaT (179 aa).

The disordered stretch occupies residues 156 to 179; that stretch reads GGLPKRDVNTVSEPDSQIPPGFRG.

Belongs to the DnaT family. As to quaternary structure, homooligomerizes. Interacts with PriB. Component of the replication restart primosome. Primosome assembly occurs via a 'hand-off' mechanism. PriA binds to replication forks, subsequently PriB then DnaT bind; DnaT then displaces ssDNA to generate the helicase loading substrate.

In terms of biological role, involved in the restart of stalled replication forks, which reloads the replicative helicase on sites other than the origin of replication. Can function in multiple replication restart pathways. Displaces ssDNA from a PriB-ssDNA complex. Probably forms a spiral filament on ssDNA. The protein is Replication restart protein DnaT of Shigella dysenteriae serotype 1 (strain Sd197).